Reading from the N-terminus, the 456-residue chain is Putative F-box/LRR-repeat protein At3g18150 (456 aa).

Residues 30–78 enclose the F-box domain; it reads VDSISSLPDVILQHILSFIPTKLAITTSLLSKRWRHVWCDTPSLSFNDY. 6 LRR repeats span residues 177–202, 203–213, 228–253, 278–303, 333–358, and 396–422; these read TCLL…TLDH, CGGLRVLDLSK, VPEL…KLPC, KADF…TLGG, IFQY…TLLT, and CLDV…DKMV.

The sequence is that of Putative F-box/LRR-repeat protein At3g18150 from Arabidopsis thaliana (Mouse-ear cress).